Here is a 316-residue protein sequence, read N- to C-terminus: Sideroflexin-4 (316 aa).

The next 5 membrane-spanning stretches (helical) occupy residues 83–103, 141–161, 174–194, 230–250, and 263–283; these read QVFL…HKGI, LLIL…QIIL, ICRS…NILV, ISRA…MALL, and IAPI…PVSF.

Belongs to the sideroflexin family.

The protein localises to the mitochondrion inner membrane. Mitochondrial amino-acid transporter. Does not act as a serine transporter: not able to mediate transport of serine into mitochondria. In Danio rerio (Zebrafish), this protein is Sideroflexin-4.